The sequence spans 288 residues: 2-dehydro-3-deoxyphosphooctonate aldolase (288 aa).

This sequence belongs to the KdsA family.

It is found in the cytoplasm. The catalysed reaction is D-arabinose 5-phosphate + phosphoenolpyruvate + H2O = 3-deoxy-alpha-D-manno-2-octulosonate-8-phosphate + phosphate. It functions in the pathway carbohydrate biosynthesis; 3-deoxy-D-manno-octulosonate biosynthesis; 3-deoxy-D-manno-octulosonate from D-ribulose 5-phosphate: step 2/3. Its pathway is bacterial outer membrane biogenesis; lipopolysaccharide biosynthesis. This chain is 2-dehydro-3-deoxyphosphooctonate aldolase, found in Bdellovibrio bacteriovorus (strain ATCC 15356 / DSM 50701 / NCIMB 9529 / HD100).